Consider the following 177-residue polypeptide: ATP-dependent protease subunit HslV (177 aa).

T7 is an active-site residue. A162, C165, and T168 together coordinate Na(+).

It belongs to the peptidase T1B family. HslV subfamily. As to quaternary structure, a double ring-shaped homohexamer of HslV is capped on each side by a ring-shaped HslU homohexamer. The assembly of the HslU/HslV complex is dependent on binding of ATP.

The protein resides in the cytoplasm. It carries out the reaction ATP-dependent cleavage of peptide bonds with broad specificity.. Allosterically activated by HslU binding. Its function is as follows. Protease subunit of a proteasome-like degradation complex believed to be a general protein degrading machinery. This is ATP-dependent protease subunit HslV from Thioalkalivibrio sulfidiphilus (strain HL-EbGR7).